A 330-amino-acid chain; its full sequence is Ribose-phosphate pyrophosphokinase (330 aa).

Asp-55–Glu-57 is an ATP binding site. Residues His-148 and Asp-187 each coordinate Mg(2+). The active site involves Lys-211. Residues Arg-213, Asp-237, and Asp-241–Thr-245 each bind D-ribose 5-phosphate.

Belongs to the ribose-phosphate pyrophosphokinase family. Class I subfamily. Homohexamer. It depends on Mg(2+) as a cofactor.

It localises to the cytoplasm. It carries out the reaction D-ribose 5-phosphate + ATP = 5-phospho-alpha-D-ribose 1-diphosphate + AMP + H(+). It functions in the pathway metabolic intermediate biosynthesis; 5-phospho-alpha-D-ribose 1-diphosphate biosynthesis; 5-phospho-alpha-D-ribose 1-diphosphate from D-ribose 5-phosphate (route I): step 1/1. Functionally, involved in the biosynthesis of the central metabolite phospho-alpha-D-ribosyl-1-pyrophosphate (PRPP) via the transfer of pyrophosphoryl group from ATP to 1-hydroxyl of ribose-5-phosphate (Rib-5-P). The chain is Ribose-phosphate pyrophosphokinase from Nostoc sp. (strain PCC 7120 / SAG 25.82 / UTEX 2576).